Consider the following 135-residue polypeptide: Transcription antitermination protein NusB (135 aa).

Belongs to the NusB family.

Involved in transcription antitermination. Required for transcription of ribosomal RNA (rRNA) genes. Binds specifically to the boxA antiterminator sequence of the ribosomal RNA (rrn) operons. This Bdellovibrio bacteriovorus (strain ATCC 15356 / DSM 50701 / NCIMB 9529 / HD100) protein is Transcription antitermination protein NusB.